A 119-amino-acid polypeptide reads, in one-letter code: Protein phosphatase EYA1 (119 aa).

This sequence belongs to the HAD-like hydrolase superfamily. EYA family. The cofactor is Mg(2+).

The protein resides in the cytoplasm. It is found in the nucleus. The catalysed reaction is O-phospho-L-tyrosyl-[protein] + H2O = L-tyrosyl-[protein] + phosphate. It catalyses the reaction O-phospho-L-seryl-[protein] + H2O = L-seryl-[protein] + phosphate. The enzyme catalyses O-phospho-L-threonyl-[protein] + H2O = L-threonyl-[protein] + phosphate. In terms of biological role, functions both as protein phosphatase and as transcriptional coactivator for SIX1, and probably also for other transcription factors of this family. Tyrosine phosphatase that dephosphorylates 'Tyr-142' of histone H2AX (H2AXY142ph) and promotes efficient DNA repair via the recruitment of DNA repair complexes containing MDC1. 'Tyr-142' phosphorylation of histone H2AX plays a central role in DNA repair and acts as a mark that distinguishes between apoptotic and repair responses to genotoxic stress. Its function as histone phosphatase may contribute to its function in transcription regulation during organogenesis. Also has phosphatase activity with proteins phosphorylated on Ser and Thr residues (in vitro). Required for normal embryonic development of the skeleton, kidneys and ears. This is Protein phosphatase EYA1 (EYA1) from Gallus gallus (Chicken).